The primary structure comprises 842 residues: Alanine--tRNA ligase (842 aa).

Zn(2+) contacts are provided by H549, H553, C650, and H654.

Belongs to the class-II aminoacyl-tRNA synthetase family. The cofactor is Zn(2+).

The protein resides in the cytoplasm. It carries out the reaction tRNA(Ala) + L-alanine + ATP = L-alanyl-tRNA(Ala) + AMP + diphosphate. Its function is as follows. Catalyzes the attachment of alanine to tRNA(Ala) in a two-step reaction: alanine is first activated by ATP to form Ala-AMP and then transferred to the acceptor end of tRNA(Ala). Also edits incorrectly charged Ser-tRNA(Ala) and Gly-tRNA(Ala) via its editing domain. The chain is Alanine--tRNA ligase from Campylobacter jejuni subsp. jejuni serotype O:6 (strain 81116 / NCTC 11828).